Reading from the N-terminus, the 27-residue chain is Pregnancy-associated glycoprotein 62 (27 aa).

It belongs to the peptidase A1 family. Post-translationally, glycosylated. In terms of tissue distribution, placenta.

This chain is Pregnancy-associated glycoprotein 62 (PAG62), found in Capra hircus (Goat).